The chain runs to 481 residues: ATP synthase subunit beta, plastid (481 aa).

162 to 169 (GGAGVGKT) contributes to the ATP binding site.

Belongs to the ATPase alpha/beta chains family. F-type ATPases have 2 components, CF(1) - the catalytic core - and CF(0) - the membrane proton channel. CF(1) has five subunits: alpha(3), beta(3), gamma(1), delta(1), epsilon(1). CF(0) has four main subunits: a(1), b(1), b'(1) and c(9-12).

It localises to the plastid membrane. It carries out the reaction ATP + H2O + 4 H(+)(in) = ADP + phosphate + 5 H(+)(out). Functionally, produces ATP from ADP in the presence of a proton gradient across the membrane. The catalytic sites are hosted primarily by the beta subunits. The sequence is that of ATP synthase subunit beta, plastid (atpB) from Prototheca wickerhamii.